Here is a 512-residue protein sequence, read N- to C-terminus: Lysine--tRNA ligase (512 aa).

2 residues coordinate Mg(2+): glutamate 408 and glutamate 415.

The protein belongs to the class-II aminoacyl-tRNA synthetase family. In terms of assembly, homodimer. It depends on Mg(2+) as a cofactor.

The protein localises to the cytoplasm. The catalysed reaction is tRNA(Lys) + L-lysine + ATP = L-lysyl-tRNA(Lys) + AMP + diphosphate. In Prochlorococcus marinus (strain MIT 9301), this protein is Lysine--tRNA ligase.